The following is a 407-amino-acid chain: Arginine deiminase (407 aa).

Catalysis depends on Cys-397, which acts as the Amidino-cysteine intermediate.

It belongs to the arginine deiminase family.

It localises to the cytoplasm. The catalysed reaction is L-arginine + H2O = L-citrulline + NH4(+). Its pathway is amino-acid degradation; L-arginine degradation via ADI pathway; carbamoyl phosphate from L-arginine: step 1/2. The sequence is that of Arginine deiminase from Salmonella choleraesuis (strain SC-B67).